Consider the following 126-residue polypeptide: Profilin-1B (126 aa).

Positions 2–36 are actin binding; the sequence is SWQTYVDTNLVGTGAVTQAAILGLDGNTWATSAGF. Lys104 bears the N6,N6,N6-trimethyllysine mark.

Belongs to the profilin family. In terms of assembly, occurs in many kinds of cells as a complex with monomeric actin in a 1:1 ratio.

It localises to the cytoplasm. It is found in the cytoskeleton. Its function is as follows. Binds to actin and affects the structure of the cytoskeleton. At high concentrations, profilin prevents the polymerization of actin, whereas it enhances it at low concentrations. By binding to PIP2, it inhibits the formation of IP3 and DG. The chain is Profilin-1B from Acanthamoeba castellanii (Amoeba).